The primary structure comprises 173 residues: NADH dehydrogenase [ubiquinone] 1 alpha subcomplex assembly factor 4 (173 aa).

A lipid anchor (N-myristoyl glycine) is attached at Gly2. The disordered stretch occupies residues 16-40; sequence KRAEREISKRKPSMAPKHPSTRDLL. A Phosphoserine modification is found at Ser35.

The protein belongs to the NDUFAF4 family. In terms of assembly, binds calmodulin. Interacts with NDUFAF3. In terms of processing, phosphorylated on serine. Prolactin stimulate serine phosphorylation.

The protein localises to the mitochondrion. Its subcellular location is the membrane. In terms of biological role, may be involved in cell proliferation and survival of hormone-dependent tumor cells. Involved in the assembly of mitochondrial NADH:ubiquinone oxidoreductase complex (complex I). This is NADH dehydrogenase [ubiquinone] 1 alpha subcomplex assembly factor 4 (Ndufaf4) from Mus musculus (Mouse).